Reading from the N-terminus, the 104-residue chain is Large ribosomal subunit protein uL24 (104 aa).

This sequence belongs to the universal ribosomal protein uL24 family. As to quaternary structure, part of the 50S ribosomal subunit.

Functionally, one of two assembly initiator proteins, it binds directly to the 5'-end of the 23S rRNA, where it nucleates assembly of the 50S subunit. In terms of biological role, one of the proteins that surrounds the polypeptide exit tunnel on the outside of the subunit. This chain is Large ribosomal subunit protein uL24, found in Flavobacterium psychrophilum (strain ATCC 49511 / DSM 21280 / CIP 103535 / JIP02/86).